A 386-amino-acid chain; its full sequence is Chaperone protein DnaJ (386 aa).

In terms of domain architecture, J spans 6–70 (DYYEVLGVDK…QKRAAYDQYG (65 aa)). A CR-type zinc finger spans residues 141 to 223 (GKDTEVSYKR…CHGTGHEKKT (83 aa)). Cys-154, Cys-157, Cys-171, Cys-174, Cys-197, Cys-200, Cys-211, and Cys-214 together coordinate Zn(2+). CXXCXGXG motif repeat units follow at residues 154-161 (CHTCGGNG), 171-178 (CHKCKGSG), 197-204 (CDVCHGTG), and 211-218 (CETCHGTG). The segment at 363–386 (LTGQSTEEQQSEGFFDKMKDAFKK) is disordered. The segment covering 364–374 (TGQSTEEQQSE) has biased composition (polar residues). Basic and acidic residues predominate over residues 376–386 (FFDKMKDAFKK).

Belongs to the DnaJ family. As to quaternary structure, homodimer. The cofactor is Zn(2+).

The protein localises to the cytoplasm. Participates actively in the response to hyperosmotic and heat shock by preventing the aggregation of stress-denatured proteins and by disaggregating proteins, also in an autonomous, DnaK-independent fashion. Unfolded proteins bind initially to DnaJ; upon interaction with the DnaJ-bound protein, DnaK hydrolyzes its bound ATP, resulting in the formation of a stable complex. GrpE releases ADP from DnaK; ATP binding to DnaK triggers the release of the substrate protein, thus completing the reaction cycle. Several rounds of ATP-dependent interactions between DnaJ, DnaK and GrpE are required for fully efficient folding. Also involved, together with DnaK and GrpE, in the DNA replication of plasmids through activation of initiation proteins. The chain is Chaperone protein DnaJ from Tetragenococcus halophilus (Pediococcus halophilus).